A 182-amino-acid chain; its full sequence is UPF0301 protein CHU_1773 (182 aa).

Belongs to the UPF0301 (AlgH) family.

This is UPF0301 protein CHU_1773 from Cytophaga hutchinsonii (strain ATCC 33406 / DSM 1761 / CIP 103989 / NBRC 15051 / NCIMB 9469 / D465).